A 293-amino-acid chain; its full sequence is C-type lectin domain family 4 member G (293 aa).

Residues 1-31 (MDTTRYSKWGGSSEEVPGGPWGRWVHWSRRP) are Cytoplasmic-facing. Position 12 is a phosphoserine (serine 12). Residues 32–52 (LFLALAVLVTTVLWAVILSIL) form a helical; Signal-anchor for type II membrane protein membrane-spanning segment. At 53 to 293 (LSKASTERAA…GWICEKRHNC (241 aa)) the chain is on the extracellular side. Asparagine 73 carries an N-linked (GlcNAc...) asparagine glycan. The stretch at 96 to 136 (SGTQAQLQTTRAELGEAQAKLMEQESALRELRERVTQGLAE) forms a coiled coil. A glycan (N-linked (GlcNAc...) asparagine) is linked at asparagine 159. The region spanning 172–287 (FEGSCYFFSV…CDSEKDGWIC (116 aa)) is the C-type lectin domain. Cysteine 264 and cysteine 278 form a disulfide bridge.

(Microbial infection) Interacts with Japanese encephalitis virus envelope protein E. As to quaternary structure, (Microbial infection) Interacts with ebolavirus glycoprotein. In terms of assembly, (Microbial infection) Interacts with SARS-CoV spike glycoprotein. (Microbial infection) Interacts with lassa virus and Lymphocytic choriomeningitis virus glycoprotein. In terms of tissue distribution, expressed exclusively in fetal and adult liver and in lymph nodes. Specifically expressed by endothelial cells lining lymph node and liver sinuses (at protein level).

The protein resides in the cell membrane. Its function is as follows. Binds mannose, N-acetylglucosamine (GlcNAc) and fucose, but not galactose, in a Ca(2+)-dependent manner, in vitro. In terms of biological role, (Microbial infection) Acts as a receptor for Japanese encephalitis virus. Functionally, (Microbial infection) Acts as a receptor for Ebolavirus. (Microbial infection) Acts as a receptor for SARS-CoV. Its function is as follows. (Microbial infection) Acts as a receptor for Lassa virus and Lymphocytic choriomeningitis virus glycoprotein. This is C-type lectin domain family 4 member G (CLEC4G) from Homo sapiens (Human).